A 277-amino-acid chain; its full sequence is Large ribosomal subunit protein uL2 (277 aa).

Positions Thr-219–Lys-277 are disordered. The segment covering Lys-258–Lys-277 has biased composition (basic residues).

The protein belongs to the universal ribosomal protein uL2 family. Part of the 50S ribosomal subunit. Forms a bridge to the 30S subunit in the 70S ribosome.

Its function is as follows. One of the primary rRNA binding proteins. Required for association of the 30S and 50S subunits to form the 70S ribosome, for tRNA binding and peptide bond formation. It has been suggested to have peptidyltransferase activity; this is somewhat controversial. Makes several contacts with the 16S rRNA in the 70S ribosome. The sequence is that of Large ribosomal subunit protein uL2 from Bacillus subtilis (strain 168).